We begin with the raw amino-acid sequence, 313 residues long: Metaxin-3 (313 aa).

A disordered region spans residues Glu280 to Ala313.

It belongs to the metaxin family. Part of a large protein complex spanning both mitochondrial membranes termed the mitochondrial intermembrane space bridging (MIB) complex.

It is found in the mitochondrion. The protein localises to the mitochondrion outer membrane. Functionally, could function in transport of proteins into the mitochondrion. The chain is Metaxin-3 (mtx3) from Danio rerio (Zebrafish).